Here is a 118-residue protein sequence, read N- to C-terminus: Myotrophin (118 aa).

3 ANK repeats span residues Met-1–Arg-30, Gly-34–Asp-65, and His-67–Gly-98.

It belongs to the myotrophin family.

Its subcellular location is the cytoplasm. The protein localises to the nucleus. It localises to the perinuclear region. Its function is as follows. Regulates NF-kappa-B transcription factor activity. Promotes growth of cardiomyocytes, but not cardiomyocyte proliferation. Promotes cardiac muscle hypertrophy. Plays a role in the regulation of the growth of actin filaments. Inhibits the activity of the F-actin-capping protein complex. This chain is Myotrophin (mtpn), found in Xenopus laevis (African clawed frog).